The sequence spans 154 residues: Large ribosomal subunit protein uL13 (154 aa).

The protein belongs to the universal ribosomal protein uL13 family. Part of the 50S ribosomal subunit.

Its function is as follows. This protein is one of the early assembly proteins of the 50S ribosomal subunit, although it is not seen to bind rRNA by itself. It is important during the early stages of 50S assembly. This Mesorhizobium japonicum (strain LMG 29417 / CECT 9101 / MAFF 303099) (Mesorhizobium loti (strain MAFF 303099)) protein is Large ribosomal subunit protein uL13.